A 241-amino-acid polypeptide reads, in one-letter code: Ribonuclease PH (241 aa).

Phosphate-binding positions include arginine 87 and 125-127; that span reads GTR.

Belongs to the RNase PH family. In terms of assembly, homohexameric ring arranged as a trimer of dimers.

The enzyme catalyses tRNA(n+1) + phosphate = tRNA(n) + a ribonucleoside 5'-diphosphate. In terms of biological role, phosphorolytic 3'-5' exoribonuclease that plays an important role in tRNA 3'-end maturation. Removes nucleotide residues following the 3'-CCA terminus of tRNAs; can also add nucleotides to the ends of RNA molecules by using nucleoside diphosphates as substrates, but this may not be physiologically important. Probably plays a role in initiation of 16S rRNA degradation (leading to ribosome degradation) during starvation. This is Ribonuclease PH from Salinispora arenicola (strain CNS-205).